The primary structure comprises 379 residues: tRNA-specific 2-thiouridylase MnmA (379 aa).

Residues 23–30 and leucine 49 contribute to the ATP site; that span reads AMSGGVDS. The active-site Nucleophile is the cysteine 117. A disulfide bond links cysteine 117 and cysteine 214. Glycine 141 contributes to the ATP binding site. The interval 163-165 is interaction with tRNA; the sequence is RDQ. The active-site Cysteine persulfide intermediate is the cysteine 214.

Belongs to the MnmA/TRMU family.

It localises to the cytoplasm. The catalysed reaction is S-sulfanyl-L-cysteinyl-[protein] + uridine(34) in tRNA + AH2 + ATP = 2-thiouridine(34) in tRNA + L-cysteinyl-[protein] + A + AMP + diphosphate + H(+). Catalyzes the 2-thiolation of uridine at the wobble position (U34) of tRNA, leading to the formation of s(2)U34. This chain is tRNA-specific 2-thiouridylase MnmA, found in Cereibacter sphaeroides (strain ATCC 17023 / DSM 158 / JCM 6121 / CCUG 31486 / LMG 2827 / NBRC 12203 / NCIMB 8253 / ATH 2.4.1.) (Rhodobacter sphaeroides).